A 210-amino-acid chain; its full sequence is Putative 3-methyladenine DNA glycosylase (210 aa).

The protein belongs to the DNA glycosylase MPG family.

This is Putative 3-methyladenine DNA glycosylase from Corynebacterium glutamicum (strain R).